A 642-amino-acid polypeptide reads, in one-letter code: Threonine--tRNA ligase (642 aa).

One can recognise a TGS domain in the interval 1–61 (MPVIRFCDGS…TEDSSISFIS (61 aa)). The interval 243–534 (DHRKIGKLLN…LIEEFSGKLP (292 aa)) is catalytic. The Zn(2+) site is built by Cys334, His385, and His511.

It belongs to the class-II aminoacyl-tRNA synthetase family. Homodimer. Requires Zn(2+) as cofactor.

It is found in the cytoplasm. It carries out the reaction tRNA(Thr) + L-threonine + ATP = L-threonyl-tRNA(Thr) + AMP + diphosphate + H(+). In terms of biological role, catalyzes the attachment of threonine to tRNA(Thr) in a two-step reaction: L-threonine is first activated by ATP to form Thr-AMP and then transferred to the acceptor end of tRNA(Thr). Also edits incorrectly charged L-seryl-tRNA(Thr). In Buchnera aphidicola subsp. Schizaphis graminum (strain Sg), this protein is Threonine--tRNA ligase.